The primary structure comprises 324 residues: Probable uridine nucleosidase 1 (324 aa).

The active site involves His248.

The protein belongs to the IUNH family.

Its subcellular location is the cytoplasm. It catalyses the reaction uridine + H2O = D-ribose + uracil. Its function is as follows. Involved in pyrimidine breakdown. The polypeptide is Probable uridine nucleosidase 1 (URH1) (Oryza sativa subsp. japonica (Rice)).